A 282-amino-acid polypeptide reads, in one-letter code: Putative 4-diphosphocytidyl-2-C-methyl-D-erythritol kinase (282 aa).

Residue lysine 9 is part of the active site. 93-103 provides a ligand contact to ATP; that stretch reads PVSAGLAGGST. Residue aspartate 135 is part of the active site.

The protein belongs to the GHMP kinase family. IspE subfamily.

The enzyme catalyses 4-CDP-2-C-methyl-D-erythritol + ATP = 4-CDP-2-C-methyl-D-erythritol 2-phosphate + ADP + H(+). Catalyzes the phosphorylation of the position 2 hydroxy group of 4-diphosphocytidyl-2C-methyl-D-erythritol. The protein is Putative 4-diphosphocytidyl-2-C-methyl-D-erythritol kinase of Staphylococcus saprophyticus subsp. saprophyticus (strain ATCC 15305 / DSM 20229 / NCIMB 8711 / NCTC 7292 / S-41).